A 153-amino-acid polypeptide reads, in one-letter code: MRAIIQRVANASVTVAEQIVGQIETGLLVLLAVSPSDTSDDLQKLADKILNLRIFPDAHDRFDRSLIDCQGQLLVVSQFTLYADTRKGRRPSFTGAAAPALAEPMVDQFIAYCRGQGITTASGQFGAAMQVQLINDGPVTIILDTAEWQHGRG.

The Gly-cisPro motif, important for rejection of L-amino acids motif lies at glycine 137–proline 138.

It belongs to the DTD family. In terms of assembly, homodimer.

It localises to the cytoplasm. The catalysed reaction is glycyl-tRNA(Ala) + H2O = tRNA(Ala) + glycine + H(+). It catalyses the reaction a D-aminoacyl-tRNA + H2O = a tRNA + a D-alpha-amino acid + H(+). Functionally, an aminoacyl-tRNA editing enzyme that deacylates mischarged D-aminoacyl-tRNAs. Also deacylates mischarged glycyl-tRNA(Ala), protecting cells against glycine mischarging by AlaRS. Acts via tRNA-based rather than protein-based catalysis; rejects L-amino acids rather than detecting D-amino acids in the active site. By recycling D-aminoacyl-tRNA to D-amino acids and free tRNA molecules, this enzyme counteracts the toxicity associated with the formation of D-aminoacyl-tRNA entities in vivo and helps enforce protein L-homochirality. The polypeptide is D-aminoacyl-tRNA deacylase (Herpetosiphon aurantiacus (strain ATCC 23779 / DSM 785 / 114-95)).